The sequence spans 283 residues: Pantothenate synthetase (283 aa).

34–41 (MGALHEGH) lines the ATP pocket. The active-site Proton donor is the His-41. Gln-65 lines the (R)-pantoate pocket. Position 65 (Gln-65) interacts with beta-alanine. 152 to 155 (GEKD) is a binding site for ATP. Gln-158 lines the (R)-pantoate pocket. 189–192 (MSSR) contributes to the ATP binding site.

Belongs to the pantothenate synthetase family. In terms of assembly, homodimer.

It is found in the cytoplasm. It catalyses the reaction (R)-pantoate + beta-alanine + ATP = (R)-pantothenate + AMP + diphosphate + H(+). The protein operates within cofactor biosynthesis; (R)-pantothenate biosynthesis; (R)-pantothenate from (R)-pantoate and beta-alanine: step 1/1. Catalyzes the condensation of pantoate with beta-alanine in an ATP-dependent reaction via a pantoyl-adenylate intermediate. In Rhodopseudomonas palustris (strain BisA53), this protein is Pantothenate synthetase.